A 364-amino-acid chain; its full sequence is MLPPVPSRLGLLLLLLCPAHVDGLWWAVGSPLVMDPTSICRKARRLAGRQAELCQAEPEVVAELARGARLGVRECQFQFRFRRWNCSSHSKAFGRVLQQDIRETAFVFAITAAGASHAVTQACSMGELLQCGCQAPRGRAPPRPSGLLGTPGPPGPTGSPDASAAWEWGGCGDDVDFGDEKSRLFMDAQHKRGRGDIRALVQLHNNEAGRLAVRSHTRTECKCHGLSGSCALRTCWQKLPPFREVGARLLERFHGASRVMGTNDGKALLPAVRTLKPPGRADLLYAADSPDFCAPNRRTGSPGTRGRACNSSAPDLSGCDLLCCGRGHRQESVQLEENCLCRFHWCCVVQCHRCRVRKELSLCL.

The first 23 residues, 1–23 (MLPPVPSRLGLLLLLLCPAHVDG), serve as a signal peptide directing secretion. 11 disulfide bridges follow: Cys75-Cys86, Cys123-Cys131, Cys133-Cys171, Cys221-Cys235, Cys223-Cys230, Cys293-Cys324, Cys309-Cys319, Cys323-Cys363, Cys339-Cys354, Cys341-Cys351, and Cys346-Cys347. An N-linked (GlcNAc...) asparagine glycan is attached at Asn85. The segment at 140–162 (APPRPSGLLGTPGPPGPTGSPDA) is disordered. Ser227 is lipidated: O-palmitoleoyl serine; by PORCN. N-linked (GlcNAc...) asparagine glycosylation is present at Asn310.

The protein belongs to the Wnt family. As to quaternary structure, interacts with PORCN. In terms of processing, palmitoleoylation is required for efficient binding to frizzled receptors. Depalmitoleoylation leads to Wnt signaling pathway inhibition. Detected in ileum, colon and stomach (at protein level).

It localises to the secreted. The protein localises to the extracellular space. It is found in the extracellular matrix. In terms of biological role, ligand for members of the frizzled family of seven transmembrane receptors. Probable developmental protein. May be a signaling molecule which affects the development of discrete regions of tissues. Is likely to signal over only few cell diameters. This chain is Protein Wnt-6 (Wnt6), found in Mus musculus (Mouse).